Reading from the N-terminus, the 438-residue chain is Enolase (438 aa).

Positions 159 and 168 each coordinate substrate. Residue Glu211 is the Proton donor of the active site. Asp246, Glu297, and Asp322 together coordinate Mg(2+). Positions 297 and 322 each coordinate substrate. Catalysis depends on Lys347, which acts as the Proton acceptor. Substrate is bound by residues 374–377 (SHRS) and Lys398.

Belongs to the enolase family. Homodimer. It depends on Mg(2+) as a cofactor.

It is found in the cytoplasm. The catalysed reaction is (2R)-2-phosphoglycerate = phosphoenolpyruvate + H2O. The protein operates within carbohydrate degradation; glycolysis; pyruvate from D-glyceraldehyde 3-phosphate: step 4/5. This chain is Enolase (enoA), found in Penicillium chrysogenum (Penicillium notatum).